The following is a 159-amino-acid chain: MKSIFLVFFAVCLVKAEAGKGRKREPNIINPPCRECYVQDSSGNCVYDKWGCGGARKREPNIINPPCRECYVQDSSGNCVYDKWGCGGARKREPNIINPPCRECYVQDSSGNCVYDKWGCGGARKREPNIINPPCRECYVQDSSGNCVYDKWGCGGARK.

An N-terminal signal peptide occupies residues 1-18 (MKSIFLVFFAVCLVKAEA). The propeptide occupies 19–26 (GKGRKREP). 2 disulfides stabilise this stretch: C33–C45 and C36–C52. A propeptide spanning residues 59–60 (EP) is cleaved from the precursor. Intrachain disulfides connect C67/C79 and C70/C86. Residues 93-94 (EP) constitute a propeptide that is removed on maturation. 2 cysteine pairs are disulfide-bonded: C101-C113 and C104-C120. Positions 127 to 128 (EP) are excised as a propeptide. 2 disulfides stabilise this stretch: C135-C147 and C138-C154.

Belongs to the sea anemone BBH family.

Its subcellular location is the secreted. It localises to the nematocyst. In terms of biological role, inhibits ion channels. The protein is U-actitoxin-Avd13b of Anemonia viridis (Snakelocks anemone).